We begin with the raw amino-acid sequence, 214 residues long: Adenylate kinase (214 aa).

10-15 (GAGKGT) serves as a coordination point for ATP. Residues 30 to 59 (STGDMLRAAVKAGSELGLKAKEIMDAGKLV) are NMP. AMP is bound by residues Thr31, Arg36, 57–59 (KLV), 85–88 (GFPR), and Gln92. The LID stretch occupies residues 122-159 (GRRVHAASGRVYHVKFNPPKVEDKDDVTGEELTIRKDD). ATP is bound by residues Arg123 and 132 to 133 (VY). 2 residues coordinate AMP: Arg156 and Arg167. Position 200 (Arg200) interacts with ATP.

Belongs to the adenylate kinase family. Monomer.

It is found in the cytoplasm. It carries out the reaction AMP + ATP = 2 ADP. Its pathway is purine metabolism; AMP biosynthesis via salvage pathway; AMP from ADP: step 1/1. Its function is as follows. Catalyzes the reversible transfer of the terminal phosphate group between ATP and AMP. Plays an important role in cellular energy homeostasis and in adenine nucleotide metabolism. This Yersinia pseudotuberculosis serotype O:1b (strain IP 31758) protein is Adenylate kinase.